Consider the following 490-residue polypeptide: Ribulose bisphosphate carboxylase large chain (490 aa).

Substrate is bound by residues Asn-127 and Thr-177. Lys-179 acts as the Proton acceptor in catalysis. Residue Lys-181 coordinates substrate. Residues Lys-205, Asp-207, and Glu-208 each coordinate Mg(2+). Lys-205 is modified (N6-carboxylysine). The active-site Proton acceptor is His-297. The substrate site is built by Arg-298, His-330, and Ser-382.

Belongs to the RuBisCO large chain family. Type I subfamily. Heterohexadecamer of 8 large chains and 8 small chains. It depends on Mg(2+) as a cofactor.

The protein resides in the plastid. It is found in the chloroplast. The catalysed reaction is 2 (2R)-3-phosphoglycerate + 2 H(+) = D-ribulose 1,5-bisphosphate + CO2 + H2O. It catalyses the reaction D-ribulose 1,5-bisphosphate + O2 = 2-phosphoglycolate + (2R)-3-phosphoglycerate + 2 H(+). RuBisCO catalyzes two reactions: the carboxylation of D-ribulose 1,5-bisphosphate, the primary event in carbon dioxide fixation, as well as the oxidative fragmentation of the pentose substrate in the photorespiration process. Both reactions occur simultaneously and in competition at the same active site. The polypeptide is Ribulose bisphosphate carboxylase large chain (Phaeodactylum tricornutum (strain CCAP 1055/1)).